The chain runs to 453 residues: MSLNVVILAAGKGTRMRSSLPKVLHPVANKPMVSHVIETARKVGAEQLHLVYGHGAELLKERIQASDLNWVLQAQQLGTGHAVAQAIPFWQDEDDVLVLYGDTPLIQPETLQRLLAAKASDGMALLTVVLDNPTGYGRIVRSNGQVVGIVEQKDANAEQLAIREVNTGVLVANGGQLRSWLSRLDNKNAQGEFYLTDVIAMAHADNCPIAAVHPDDAMEVEGANNRVQLAQLERSYQKMQAERLMIAGATLIDPARFDLRGTLEIGEEVVIDVNVIIEGKVVLGNHVRIGAGSVLKDCVIGDHSEVKPYSVIEGAQIADQCSVGPFTRLRPGTVLEQDAHVGNFVEMKKARLGVGSKCGHLTYLGDAEVGAKVNIGAGTITCNYDGVNKFQTIIEDDVFVGSDTQLVAPVRIGKGATLGAGSTITKDVAENELVITRVPQRHIQNWARPVKKK.

Positions 1–226 (MSLNVVILAA…AMEVEGANNR (226 aa)) are pyrophosphorylase. Residues 8 to 11 (LAAG), Lys-22, Gln-73, 78 to 79 (GT), 100 to 102 (YGD), Gly-137, Glu-151, Asn-166, and Asn-224 contribute to the UDP-N-acetyl-alpha-D-glucosamine site. Residue Asp-102 participates in Mg(2+) binding. Asn-224 is a Mg(2+) binding site. Residues 227-247 (VQLAQLERSYQKMQAERLMIA) are linker. The segment at 248–453 (GATLIDPARF…QNWARPVKKK (206 aa)) is N-acetyltransferase. Positions 330 and 348 each coordinate UDP-N-acetyl-alpha-D-glucosamine. The active-site Proton acceptor is the His-360. The UDP-N-acetyl-alpha-D-glucosamine site is built by Tyr-363 and Asn-374. Acetyl-CoA-binding positions include Ala-377, 383-384 (NY), Ser-402, Ala-420, and Arg-437.

This sequence in the N-terminal section; belongs to the N-acetylglucosamine-1-phosphate uridyltransferase family. The protein in the C-terminal section; belongs to the transferase hexapeptide repeat family. As to quaternary structure, homotrimer. Requires Mg(2+) as cofactor.

It localises to the cytoplasm. It catalyses the reaction alpha-D-glucosamine 1-phosphate + acetyl-CoA = N-acetyl-alpha-D-glucosamine 1-phosphate + CoA + H(+). The catalysed reaction is N-acetyl-alpha-D-glucosamine 1-phosphate + UTP + H(+) = UDP-N-acetyl-alpha-D-glucosamine + diphosphate. It participates in nucleotide-sugar biosynthesis; UDP-N-acetyl-alpha-D-glucosamine biosynthesis; N-acetyl-alpha-D-glucosamine 1-phosphate from alpha-D-glucosamine 6-phosphate (route II): step 2/2. The protein operates within nucleotide-sugar biosynthesis; UDP-N-acetyl-alpha-D-glucosamine biosynthesis; UDP-N-acetyl-alpha-D-glucosamine from N-acetyl-alpha-D-glucosamine 1-phosphate: step 1/1. Its pathway is bacterial outer membrane biogenesis; LPS lipid A biosynthesis. Catalyzes the last two sequential reactions in the de novo biosynthetic pathway for UDP-N-acetylglucosamine (UDP-GlcNAc). The C-terminal domain catalyzes the transfer of acetyl group from acetyl coenzyme A to glucosamine-1-phosphate (GlcN-1-P) to produce N-acetylglucosamine-1-phosphate (GlcNAc-1-P), which is converted into UDP-GlcNAc by the transfer of uridine 5-monophosphate (from uridine 5-triphosphate), a reaction catalyzed by the N-terminal domain. The polypeptide is Bifunctional protein GlmU (Aeromonas hydrophila subsp. hydrophila (strain ATCC 7966 / DSM 30187 / BCRC 13018 / CCUG 14551 / JCM 1027 / KCTC 2358 / NCIMB 9240 / NCTC 8049)).